The following is a 323-amino-acid chain: tRNA dimethylallyltransferase (323 aa).

15 to 22 (GATGSGKT) serves as a coordination point for ATP. Residue 17–22 (TGSGKT) coordinates substrate. Interaction with substrate tRNA stretches follow at residues 40-43 (DSRQ) and 164-168 (QRLIR).

This sequence belongs to the IPP transferase family. In terms of assembly, monomer. Mg(2+) serves as cofactor.

The catalysed reaction is adenosine(37) in tRNA + dimethylallyl diphosphate = N(6)-dimethylallyladenosine(37) in tRNA + diphosphate. Functionally, catalyzes the transfer of a dimethylallyl group onto the adenine at position 37 in tRNAs that read codons beginning with uridine, leading to the formation of N6-(dimethylallyl)adenosine (i(6)A). The polypeptide is tRNA dimethylallyltransferase (Chloroherpeton thalassium (strain ATCC 35110 / GB-78)).